Reading from the N-terminus, the 80-residue chain is Tripartite terminase subunit 2 (80 aa).

It belongs to the herpesviridae TRM2 protein family. As to quaternary structure, associates with TRM1 and TRM3 to form the tripartite terminase complex.

Its subcellular location is the host nucleus. In terms of biological role, component of the molecular motor that translocates viral genomic DNA in empty capsid during DNA packaging. Forms a tripartite terminase complex together with TRM1 and TRM3 in the host cytoplasm. Once the complex reaches the host nucleus, it interacts with the capsid portal vertex. This portal forms a ring in which genomic DNA is translocated into the capsid. This Homo sapiens (Human) protein is Tripartite terminase subunit 2.